A 334-amino-acid polypeptide reads, in one-letter code: Ribosomal RNA small subunit methyltransferase H (334 aa).

The segment at 1–21 (MNALPIRTAAPSGHSGGHSST) is disordered. Residues 52–54 (GGY), Asp71, Phe98, Asp119, and Gln126 contribute to the S-adenosyl-L-methionine site.

Belongs to the methyltransferase superfamily. RsmH family.

The protein localises to the cytoplasm. It carries out the reaction cytidine(1402) in 16S rRNA + S-adenosyl-L-methionine = N(4)-methylcytidine(1402) in 16S rRNA + S-adenosyl-L-homocysteine + H(+). Its function is as follows. Specifically methylates the N4 position of cytidine in position 1402 (C1402) of 16S rRNA. The protein is Ribosomal RNA small subunit methyltransferase H of Granulibacter bethesdensis (strain ATCC BAA-1260 / CGDNIH1).